The primary structure comprises 177 residues: Protein PrsK (177 aa).

The signal sequence occupies residues 1–21 (MIKSTGALLLFAALSAGQAMA).

It is found in the fimbrium. In Escherichia coli, this protein is Protein PrsK (prsK).